The following is a 319-amino-acid chain: D-alanine--D-alanine ligase (319 aa).

In terms of domain architecture, ATP-grasp spans 120-315 (KRVLAQAGVP…YPELLRRLVE (196 aa)). 147-198 (DPPFFVKPANTGSSVGISRVERFQDLEAALALAFRYDEKAVVEKALSPVREL) contacts ATP. Residues aspartate 270, glutamate 282, and asparagine 284 each contribute to the Mg(2+) site.

The protein belongs to the D-alanine--D-alanine ligase family. Mg(2+) is required as a cofactor. The cofactor is Mn(2+).

The protein resides in the cytoplasm. It catalyses the reaction 2 D-alanine + ATP = D-alanyl-D-alanine + ADP + phosphate + H(+). It functions in the pathway cell wall biogenesis; peptidoglycan biosynthesis. Cell wall formation. This Thermus thermophilus (strain ATCC 27634 / DSM 579 / HB8) protein is D-alanine--D-alanine ligase.